We begin with the raw amino-acid sequence, 140 residues long: Transcription antitermination protein NusB (140 aa).

This sequence belongs to the NusB family.

Its function is as follows. Involved in transcription antitermination. Required for transcription of ribosomal RNA (rRNA) genes. Binds specifically to the boxA antiterminator sequence of the ribosomal RNA (rrn) operons. This chain is Transcription antitermination protein NusB, found in Elusimicrobium minutum (strain Pei191).